The primary structure comprises 117 residues: Fluoride-specific ion channel FluC 2 (117 aa).

Helical transmembrane passes span 1-21 (MISI…RSAI) and 46-66 (FLIG…AFFV). Residues Gly-71 and Thr-74 each contribute to the Na(+) site. A helical transmembrane segment spans residues 95-115 (LFLNYSLLQFIIGFIACYIGY).

The protein belongs to the fluoride channel Fluc/FEX (TC 1.A.43) family.

The protein resides in the cell membrane. It catalyses the reaction fluoride(in) = fluoride(out). Its activity is regulated as follows. Na(+) is not transported, but it plays an essential structural role and its presence is essential for fluoride channel function. In terms of biological role, fluoride-specific ion channel. Important for reducing fluoride concentration in the cell, thus reducing its toxicity. In Staphylococcus aureus (strain NCTC 8325 / PS 47), this protein is Fluoride-specific ion channel FluC 2.